The primary structure comprises 382 residues: cAMP-dependent protein kinase type I-alpha regulatory subunit (382 aa).

Ala2 is subject to N-acetylalanine. The dimerization and phosphorylation stretch occupies residues 2 to 136 (ATSSSSSSEE…AALAKAIEKN (135 aa)). A disordered region spans residues 62–96 (TKQLLNQQKSGSRSDSREDEISPPPPMNPVVKGRR). The Pseudophosphorylation motif signature appears at 97-101 (RRGAI). Residues 138 to 255 (LFAH…SKVS), Glu203, Arg212, 256 to 382 (ILES…SLSV), Glu327, and Arg336 contribute to the 3',5'-cyclic AMP site.

Belongs to the cAMP-dependent kinase regulatory chain family. As to quaternary structure, the inactive form of the enzyme is composed of two regulatory chains and two catalytic chains. Activation by cAMP produces two active catalytic monomers and a regulatory dimer that binds four cAMP molecules. In terms of processing, the pseudophosphorylation site binds to the substrate-binding region of the catalytic chain but is not phosphorylated. The physiological significance of phosphorylations by other kinases is unclear.

It is found in the cell membrane. This Gallus gallus (Chicken) protein is cAMP-dependent protein kinase type I-alpha regulatory subunit (PRKAR1A).